The sequence spans 312 residues: Methionyl-tRNA formyltransferase (312 aa).

112 to 115 (SLLP) contributes to the (6S)-5,6,7,8-tetrahydrofolate binding site.

The protein belongs to the Fmt family.

It carries out the reaction L-methionyl-tRNA(fMet) + (6R)-10-formyltetrahydrofolate = N-formyl-L-methionyl-tRNA(fMet) + (6S)-5,6,7,8-tetrahydrofolate + H(+). In terms of biological role, attaches a formyl group to the free amino group of methionyl-tRNA(fMet). The formyl group appears to play a dual role in the initiator identity of N-formylmethionyl-tRNA by promoting its recognition by IF2 and preventing the misappropriation of this tRNA by the elongation apparatus. This chain is Methionyl-tRNA formyltransferase, found in Magnetococcus marinus (strain ATCC BAA-1437 / JCM 17883 / MC-1).